The primary structure comprises 398 residues: Cysteine desulfurase 2 (398 aa).

Residues 71–72, asparagine 150, glutamine 178, and 198–200 each bind pyridoxal 5'-phosphate; these read GT and SGH. Lysine 201 is modified (N6-(pyridoxal phosphate)lysine). Threonine 236 provides a ligand contact to pyridoxal 5'-phosphate. Cysteine 323 functions as the Cysteine persulfide intermediate in the catalytic mechanism. A [2Fe-2S] cluster-binding site is contributed by cysteine 323.

Belongs to the class-V pyridoxal-phosphate-dependent aminotransferase family. NifS/IscS subfamily. In terms of assembly, homodimer. Requires pyridoxal 5'-phosphate as cofactor.

The catalysed reaction is (sulfur carrier)-H + L-cysteine = (sulfur carrier)-SH + L-alanine. Its function is as follows. Catalyzes the removal of elemental sulfur atoms from cysteine to produce alanine. Seems to participate in the biosynthesis of the nitrogenase metalloclusters by providing the inorganic sulfur required for the Fe-S core formation. The sequence is that of Cysteine desulfurase 2 from Trichormus variabilis (strain ATCC 29413 / PCC 7937) (Anabaena variabilis).